We begin with the raw amino-acid sequence, 408 residues long: MTSKGPEEEHPSVTLFRQYLRIRTVQPKPDYGAAVAFFEETARQLGLGCQKVEVAPGYVVTVLTWPGTNPTLSSILLNSHTDVVPVFKEHWSHDPFEAFKDSEGYIYTRGAQDMKCVSIQYLEAVKRLKVEGHRFPRTIHMTFVPDEEVGGHQGMELFVQRHEFHALRAGFALDEGLANPTDAFTVFYSERSPWWVRVTSTGRPGHASRFMEDTAAEKLHKVVNSILAFREKEWQRLQSNPHLKEGSVTSVNLTKLEGGVAYNVVPATMSACFDFRVAPDVDMKAFEEQLQSWCQEAGEGVTFEFAQKFTEPRMTPTDDTDPWWAAFSGACKEMTLTLEPEIFPAATDSRYIRAVGIPALGFSPMNRTPVLLHDHNERLHEAVFLRGVDIYTRLVAALASVPALPGES.

Histidine 80 provides a ligand contact to Zn(2+). The active site involves aspartate 82. Aspartate 113 serves as a coordination point for Zn(2+). Glutamate 147 (proton acceptor) is an active-site residue. The Zn(2+) site is built by glutamate 148, glutamate 175, and histidine 373. Serine 408 carries the phosphoserine modification.

This sequence belongs to the peptidase M20A family. Homodimer. Zn(2+) serves as cofactor. In terms of tissue distribution, expressed in kidney.

The protein localises to the cytoplasm. It carries out the reaction an N-acyl-L-amino acid + H2O = an L-alpha-amino acid + a carboxylate. The catalysed reaction is an N-acetyl-L-cysteine-S-conjugate + H2O = an S-substituted L-cysteine + acetate. Its function is as follows. Involved in the hydrolysis of N-acylated or N-acetylated amino acids (except L-aspartate). The sequence is that of Aminoacylase-1B (Acy1b) from Rattus norvegicus (Rat).